We begin with the raw amino-acid sequence, 349 residues long: Uroporphyrinogen decarboxylase (349 aa).

Substrate is bound by residues 23 to 27, Asp-71, Tyr-148, Ser-203, and His-317; that span reads RQAGR.

This sequence belongs to the uroporphyrinogen decarboxylase family. Homodimer.

The protein resides in the cytoplasm. The enzyme catalyses uroporphyrinogen III + 4 H(+) = coproporphyrinogen III + 4 CO2. The protein operates within porphyrin-containing compound metabolism; protoporphyrin-IX biosynthesis; coproporphyrinogen-III from 5-aminolevulinate: step 4/4. Catalyzes the decarboxylation of four acetate groups of uroporphyrinogen-III to yield coproporphyrinogen-III. In Sorangium cellulosum (strain So ce56) (Polyangium cellulosum (strain So ce56)), this protein is Uroporphyrinogen decarboxylase.